Reading from the N-terminus, the 331-residue chain is Mucin-15 (331 aa).

Residues 1–22 form the signal peptide; it reads MLTLAKIALISSLFISLPFARP. Residues 23 to 233 are Extracellular-facing; the sequence is QKQNPRRNVT…SDTPKENKNT (211 aa). Residues N30, N44, N54, N59, N75, N84, N120, N136, N145, N152, N215, and N222 are each glycosylated (N-linked (GlcNAc...) asparagine). A compositionally biased stretch (polar residues) spans 124 to 162; the sequence is ADANPLQVSEHSNSTNSPSPENFTWSLDNDTMNSPEDIS. The interval 124–186 is disordered; that stretch reads ADANPLQVSE…VTPFTAEPTE (63 aa). The helical transmembrane segment at 234–254 threads the bilayer; the sequence is GIVFGAILGAILGASLLSLVG. Topologically, residues 255–331 are cytoplasmic; that stretch reads YLLCGQRKTD…DAIPPLRPSI (77 aa). A disordered region spans residues 302 to 331; the sequence is AVSDSSMPEGGESLQDGIPMDAIPPLRPSI.

In terms of processing, highly glycosylated (N- and O-linked carbohydrates).

The protein localises to the membrane. This Mus musculus (Mouse) protein is Mucin-15 (Muc15).